The chain runs to 549 residues: Lipase 3 (549 aa).

A signal peptide spans 1–15 (MKLALALSLIASVAA). Cysteine 75 and cysteine 112 form a disulfide bridge. Serine 224 serves as the catalytic Acyl-ester intermediate. Residues cysteine 283 and cysteine 292 are joined by a disulfide bond. Asparagine 329 is a glycosylation site (N-linked (GlcNAc...) asparagine). Catalysis depends on glutamate 356, which acts as the Charge relay system. Residue asparagine 366 is glycosylated (N-linked (GlcNAc...) asparagine). Histidine 464 serves as the catalytic Charge relay system.

Belongs to the type-B carboxylesterase/lipase family. Monomer and homodimer.

It catalyses the reaction a triacylglycerol + H2O = a diacylglycerol + a fatty acid + H(+). The sequence is that of Lipase 3 (LIP3) from Diutina rugosa (Yeast).